The sequence spans 525 residues: Chromosomal replication initiator protein DnaA (525 aa).

A domain I, interacts with DnaA modulators region spans residues 1 to 71; the sequence is MNDFWQHCSA…ADLAREFWNT (71 aa). Residues 71-188 are domain II; sequence TPIEVQFVLD…AEADSMYERS (118 aa). Residues 160–181 form a disordered region; the sequence is AAAGRRTWRPGPGAAPANGAEA. Low complexity predominate over residues 169–181; it reads PGPGAAPANGAEA. The interval 189–405 is domain III, AAA+ region; the sequence is KLNPVLTFDN…GALRKILAYS (217 aa). 4 residues coordinate ATP: Gly-233, Gly-235, Lys-236, and Thr-237. Residues 406–525 form a domain IV, binds dsDNA region; it reads KFHGREISIE…LHVLEQTLKG (120 aa).

This sequence belongs to the DnaA family. In terms of assembly, oligomerizes as a right-handed, spiral filament on DNA at oriC.

It localises to the cytoplasm. Functionally, plays an essential role in the initiation and regulation of chromosomal replication. ATP-DnaA binds to the origin of replication (oriC) to initiate formation of the DNA replication initiation complex once per cell cycle. Binds the DnaA box (a 9 base pair repeat at the origin) and separates the double-stranded (ds)DNA. Forms a right-handed helical filament on oriC DNA; dsDNA binds to the exterior of the filament while single-stranded (ss)DNA is stabiized in the filament's interior. The ATP-DnaA-oriC complex binds and stabilizes one strand of the AT-rich DNA unwinding element (DUE), permitting loading of DNA polymerase. After initiation quickly degrades to an ADP-DnaA complex that is not apt for DNA replication. Binds acidic phospholipids. This is Chromosomal replication initiator protein DnaA from Burkholderia vietnamiensis (strain G4 / LMG 22486) (Burkholderia cepacia (strain R1808)).